A 235-amino-acid polypeptide reads, in one-letter code: Hydroxyacylglutathione hydrolase (235 aa).

Zn(2+) is bound by residues His-53, His-55, Asp-57, His-58, His-109, Asp-127, and His-165.

The protein belongs to the metallo-beta-lactamase superfamily. Glyoxalase II family. Monomer. Requires Zn(2+) as cofactor.

It carries out the reaction an S-(2-hydroxyacyl)glutathione + H2O = a 2-hydroxy carboxylate + glutathione + H(+). The protein operates within secondary metabolite metabolism; methylglyoxal degradation; (R)-lactate from methylglyoxal: step 2/2. In terms of biological role, thiolesterase that catalyzes the hydrolysis of S-D-lactoyl-glutathione to form glutathione and D-lactic acid. The sequence is that of Hydroxyacylglutathione hydrolase from Glaesserella parasuis serovar 5 (strain SH0165) (Haemophilus parasuis).